The chain runs to 199 residues: MAKILVLYYSMYGHIETLAGAIAEGARKVSGVDVTIKRVPETMPAEAFAKAGGKTNQQAPVATPHELADYDGIIFGTPTRFGNMSGQMRTFLDQTGGLWASGALYGKVASVFASTGTGGGQEHTITSTWTTLAHHGFIIVPIGYGAKELFDVSQTRGGTPYGATTIAGGDGSRQPSAEELAIARFQGEHVAKITAKLKG.

Residues 4-190 (ILVLYYSMYG…AIARFQGEHV (187 aa)) form the Flavodoxin-like domain. FMN is bound by residues 10–15 (SMYGHI) and 79–81 (TRF). Tyrosine 12 serves as a coordination point for NAD(+). Tryptophan 99 serves as a coordination point for substrate. Residues 114–119 (STGTGG) and histidine 134 each bind FMN.

This sequence belongs to the WrbA family. It depends on FMN as a cofactor.

It carries out the reaction a quinone + NADH + H(+) = a quinol + NAD(+). The enzyme catalyses a quinone + NADPH + H(+) = a quinol + NADP(+). This is NAD(P)H dehydrogenase (quinone) from Yersinia pseudotuberculosis serotype O:1b (strain IP 31758).